Reading from the N-terminus, the 264-residue chain is Hydroxyethylthiazole kinase (264 aa).

Met43 is a binding site for substrate. The ATP site is built by Arg119 and Thr165. Position 192 (Gly192) interacts with substrate.

It belongs to the Thz kinase family. Mg(2+) is required as a cofactor.

The enzyme catalyses 5-(2-hydroxyethyl)-4-methylthiazole + ATP = 4-methyl-5-(2-phosphooxyethyl)-thiazole + ADP + H(+). It participates in cofactor biosynthesis; thiamine diphosphate biosynthesis; 4-methyl-5-(2-phosphoethyl)-thiazole from 5-(2-hydroxyethyl)-4-methylthiazole: step 1/1. Catalyzes the phosphorylation of the hydroxyl group of 4-methyl-5-beta-hydroxyethylthiazole (THZ). This Anoxybacillus flavithermus (strain DSM 21510 / WK1) protein is Hydroxyethylthiazole kinase.